Here is a 53-residue protein sequence, read N- to C-terminus: Metallocarboxypeptidase inhibitor (53 aa).

3 disulfides stabilise this stretch: C9-C23, C15-C51, and C27-C38. Zn(2+) is bound at residue A53.

As to quaternary structure, monomer. Interacts (via C-terminus) with human CPA4.

Metallocarboxypeptidase inhibitor. Has an inhibitory effect on bovine CPA1 and CPB2, human CPA1, CPA2, CPA4, CPB1 and CPB2, and porcine CPB1. Does not inhibit D.melanogaster svr (carboxypeptidase D). Shows no activity against serine proteases subtilisin or bovine trypsin, cysteine protease papain, and aspartyl protease porcine pepsin. The protein is Metallocarboxypeptidase inhibitor of Nerita versicolor (Four-tooth nerite).